A 692-amino-acid polypeptide reads, in one-letter code: Elongation factor G (692 aa).

The region spanning 9–284 (HKVRNIGIAA…AVVDYLPAPD (276 aa)) is the tr-type G domain. GTP is bound by residues 18 to 25 (AHIDAGKT), 82 to 86 (DTPGH), and 136 to 139 (NKMD).

This sequence belongs to the TRAFAC class translation factor GTPase superfamily. Classic translation factor GTPase family. EF-G/EF-2 subfamily.

It localises to the cytoplasm. Functionally, catalyzes the GTP-dependent ribosomal translocation step during translation elongation. During this step, the ribosome changes from the pre-translocational (PRE) to the post-translocational (POST) state as the newly formed A-site-bound peptidyl-tRNA and P-site-bound deacylated tRNA move to the P and E sites, respectively. Catalyzes the coordinated movement of the two tRNA molecules, the mRNA and conformational changes in the ribosome. The sequence is that of Elongation factor G from Campylobacter concisus (strain 13826).